A 351-amino-acid chain; its full sequence is Peroxidase C1B (351 aa).

A signal peptide spans 1–28 (MHSPSSTSFTWILITLGCLAFYASLSDA). Disulfide bonds link cysteine 39/cysteine 119, cysteine 72/cysteine 77, cysteine 125/cysteine 329, and cysteine 205/cysteine 237. A glycan (N-linked (GlcNAc...) asparagine) is linked at asparagine 41. Histidine 70 functions as the Proton acceptor in the catalytic mechanism. Positions 71, 74, 76, 78, and 80 each coordinate Ca(2+). A glycan (N-linked (GlcNAc...) asparagine) is linked at asparagine 85. A substrate-binding site is contributed by proline 167. A heme b-binding site is contributed by histidine 198. Ca(2+) is bound at residue threonine 199. Residues asparagine 214, asparagine 226, and asparagine 242 are each glycosylated (N-linked (GlcNAc...) asparagine). The Ca(2+) site is built by aspartate 250, threonine 253, and aspartate 258. Residue asparagine 283 is glycosylated (N-linked (GlcNAc...) asparagine).

This sequence belongs to the peroxidase family. Classical plant (class III) peroxidase subfamily. Ca(2+) is required as a cofactor. Heme b serves as cofactor.

It is found in the secreted. The protein resides in the vacuole. The catalysed reaction is 2 a phenolic donor + H2O2 = 2 a phenolic radical donor + 2 H2O. Functionally, removal of H(2)O(2), oxidation of toxic reductants, biosynthesis and degradation of lignin, suberization, auxin catabolism, response to environmental stresses such as wounding, pathogen attack and oxidative stress. These functions might be dependent on each isozyme/isoform in each plant tissue. This is Peroxidase C1B (PRXC1B) from Armoracia rusticana (Horseradish).